A 383-amino-acid chain; its full sequence is Glutaminyl-peptide cyclotransferase-like protein (383 aa).

Residues 1–25 (MPSGGRGRPRLQVGERSLLERPSPP) are disordered. The helical transmembrane segment at 35 to 57 (LLPQLLLALTVASVFYTIWRIWH) threads the bilayer. A disulfide bridge connects residues Cys168 and Cys192. Asp187 lines the Zn(2+) pocket. Glu226 acts as the Proton acceptor in catalysis. Residue Glu227 coordinates Zn(2+). The Proton acceptor role is filled by Asp270. A Zn(2+)-binding site is contributed by His352.

The protein belongs to the glutaminyl-peptide cyclotransferase family.

The protein resides in the golgi apparatus membrane. The enzyme catalyses N-terminal L-glutaminyl-[peptide] = N-terminal 5-oxo-L-prolyl-[peptide] + NH4(+). In terms of biological role, responsible for the biosynthesis of pyroglutamyl peptides. This chain is Glutaminyl-peptide cyclotransferase-like protein (QPCTL), found in Bos taurus (Bovine).